A 458-amino-acid polypeptide reads, in one-letter code: Exodeoxyribonuclease 7 large subunit (458 aa).

The protein belongs to the XseA family. Heterooligomer composed of large and small subunits.

It is found in the cytoplasm. It carries out the reaction Exonucleolytic cleavage in either 5'- to 3'- or 3'- to 5'-direction to yield nucleoside 5'-phosphates.. Bidirectionally degrades single-stranded DNA into large acid-insoluble oligonucleotides, which are then degraded further into small acid-soluble oligonucleotides. This is Exodeoxyribonuclease 7 large subunit from Escherichia coli (strain UTI89 / UPEC).